A 143-amino-acid chain; its full sequence is Ribonuclease P protein component 2 (143 aa).

It belongs to the eukaryotic/archaeal RNase P protein component 2 family. Consists of a catalytic RNA component and at least 4-5 protein subunits.

It is found in the cytoplasm. The enzyme catalyses Endonucleolytic cleavage of RNA, removing 5'-extranucleotides from tRNA precursor.. Its function is as follows. Part of ribonuclease P, a protein complex that generates mature tRNA molecules by cleaving their 5'-ends. The sequence is that of Ribonuclease P protein component 2 from Saccharolobus solfataricus (strain ATCC 35092 / DSM 1617 / JCM 11322 / P2) (Sulfolobus solfataricus).